We begin with the raw amino-acid sequence, 219 residues long: Orotidine 5'-phosphate decarboxylase (219 aa).

Substrate is bound by residues Asp10, Lys32, 58-67, Ser113, 163-173, Gly186, and Arg187; these read DFKVADIPYT and PGIGAQGGDPY. Residue Lys60 is the Proton donor of the active site.

Belongs to the OMP decarboxylase family. Type 1 subfamily. As to quaternary structure, homodimer.

It catalyses the reaction orotidine 5'-phosphate + H(+) = UMP + CO2. It functions in the pathway pyrimidine metabolism; UMP biosynthesis via de novo pathway; UMP from orotate: step 2/2. In terms of biological role, catalyzes the decarboxylation of orotidine 5'-monophosphate (OMP) to uridine 5'-monophosphate (UMP). This Thermoplasma volcanium (strain ATCC 51530 / DSM 4299 / JCM 9571 / NBRC 15438 / GSS1) protein is Orotidine 5'-phosphate decarboxylase.